A 1281-amino-acid chain; its full sequence is MVRIAEYSRTATFAWSNDRIPYLVSGTASGTIDADFSNESKLELWSLLGTDADKPSHSVSTDAKFKDLDWSADNKYIAGAMDNGAVEIYEFNSSKQELKKQGSFKNHSTVVRTVKFNSKQNNVLLSGGNSQEIFIWDLNKLLDSKANYQPLTPGVSMSPIDEIHSLSWNKSLAHVFASASNSSFASIWDLKAKKEVIHLSYTSQNTGLKSDFSAVEWHPLNSTRVATATSNDNEPLILVWDLRNSNTPLQTLSAANNQGHGHSKGILSLDWCQQDENLLLSSARDSSVMLWNPQSGEALTEYNTTGNWCFKSKFAPQAPDLFAFATLDGKKIEVQTLQNYETTLDEEVSKTKQQESETDFWNHVSEEKAEIKSTVVHLQAPSWYGNKSASAQWAFGGKLVQVTKDGKGVEVNKPEITDLKSDDTLKNALASKDFQPLINQRLVKVVNETNEEDWNLLEKLSMDGKEEFLKEALELDEEEDEEKDQEGKDGDEFFQKIESNFQPSGSFKIDSNEESVINNILSGNNSKAVSELLKSGSILEAFVVAVTCNDEKLKEDVKDAYFAAHGKESSLSRVLFSSSKKNSDDIVENLDISQWKYITKSIYNFHANDEVERTNKLLQLGDRLLANKNRQDALVIYIAAGSLDKIATVWLNEFSTLENKIKDQEKTIYEAHIECLTEFVERFTILSNFVGKKQKITNESLISKFLEFINITSATGNFDLALLFLDILPEDNEYVIAEKKRVMVASGKVVDQSQSRKGKYGSHANLASAGFSGHAKQPVNLPPTAAPFAAQTMGGYAPQAVGAVPTPAVPVPQTRNASVSIKSNPYGPAGTNVGTSDNKFNAYAPPTHTQVPVATPVTSSFIPPANPYSNVAAQSLAMAAEQNAMSPNLAGSAPPVKSPSVYSGQTPHLNKKANDGWNDLALPVKEKPQRAKPVTVAPSPILAPATNGAAAAVPTKSIGTVFPPTGGNSRVPSSMVSPPPPQKRASRTPSLINIDDVVNARPKAHTSIYAPQTTQAGPAPVAPQSDIPLAPTANPYAPNQSVGSTPLQKPVNPYAPPAQQAGIPSAANPYASQIPSKAPVNAPPPMSSKKAPVGPPPMSSRKKAHEGKTLSHEAASVLDSSKPVQTQPIASELSREPAPVPTSASQTQVPPPVQETPARNTISPIDMAAPAVEQGISAAQQPIRDFFSSELARVTPLTPKEYNKQLKDCDKRLKILFTHLEKNLLSQPTVDKLLHIIELLKEKKYHEAMEVHKDIATNHAEEGGNWLTGVKRLISISEATA.

WD repeat units lie at residues 5–46 (AEYS…ELWS), 60–99 (STDA…QELK), 106–146 (NHST…DSKA), 158–198 (SPID…EVIH), 207–250 (GLKS…TPLQ), 261–301 (GHSK…ALTE), and 329–371 (GKKI…KAEI). The WD 8; interaction with SEC13 repeat unit spans residues 392–412 (QWAFGGKLVQVTKDGKGVEVN). 2 disordered regions span residues 960–991 (TVFP…TPSL) and 1010–1157 (APQT…QETP). 2 stretches are compositionally biased toward polar residues: residues 1037–1047 (APNQSVGSTPL) and 1118–1129 (LDSSKPVQTQPI).

Belongs to the WD repeat SEC31 family. As to quaternary structure, the COPII coat is composed of at least 5 proteins: the SEC23/24 complex, the SEC13/31 complex, and the protein SAR1. SEC13 and SEC31 make a 2:2 tetramer that forms the edge element of the COPII outer coat. The tetramer self-assembles in multiple copies to form the complete polyhedral cage. Interacts (via WD 8) with SEC13.

The protein resides in the cytoplasmic vesicle. It localises to the COPII-coated vesicle membrane. The protein localises to the endoplasmic reticulum membrane. Functionally, component of the coat protein complex II (COPII) which promotes the formation of transport vesicles from the endoplasmic reticulum (ER). The coat has two main functions, the physical deformation of the endoplasmic reticulum membrane into vesicles and the selection of cargo molecules. This is Protein transport protein SEC31 (SEC31) from Candida glabrata (strain ATCC 2001 / BCRC 20586 / JCM 3761 / NBRC 0622 / NRRL Y-65 / CBS 138) (Yeast).